The sequence spans 298 residues: Replication protein A 32 kDa subunit B (298 aa).

The OB DNA-binding region spans 89 to 163; sequence VRLVGRMLNK…QVVAYSVRRI (75 aa).

It belongs to the replication factor A protein 2 family. Heterotrimer of RPA1, RPA2 and RPA3 (canonical replication protein A complex). Interacts with RPA1A and RPA3. Phosphorylated in a cell-cycle-dependent manner (from the S phase until mitosis). In response to DNA damage, recruited to DNA-repair nuclear foci, as a hypophosphorylated form.

The protein localises to the nucleus. Component of the replication protein A complex (RPA) required for DNA recombination, repair and replication. The activity of RPA is mediated by single-stranded DNA binding and protein interactions. The sequence is that of Replication protein A 32 kDa subunit B (RPA2B) from Oryza sativa subsp. japonica (Rice).